Consider the following 151-residue polypeptide: NPC intracellular cholesterol transporter 2 (151 aa).

A signal peptide spans 1–19; that stretch reads MRFLAATFLLLALSTAAQA. 3 cysteine pairs are disulfide-bonded: Cys27/Cys140, Cys42/Cys47, and Cys93/Cys99. The N-linked (GlcNAc...) asparagine glycan is linked to Asn58. Lys116 bears the N6-acetyllysine mark. The N-linked (GlcNAc...) asparagine glycan is linked to Asn135.

This sequence belongs to the NPC2 family. Interacts with NPC1 (via the second lumenal domain) in a cholestrol-dependent manner. Interacts with NUS1/NgBR, the interaction stabilizes NCP2 and regulates cholesterol trafficking. Interacts with DHDDS. Interacts with NEDD4L (via C2 domain). Interacts with NPC1L1. In terms of tissue distribution, detected in gallbladder bile. Detected in fibroblasts, kidney, liver, spleen, small intestine, placenta and testis (at protein level). Epididymis.

The protein resides in the secreted. The protein localises to the endoplasmic reticulum. It localises to the lysosome. It carries out the reaction cholesterol(in) = cholesterol(out). In terms of biological role, intracellular cholesterol transporter which acts in concert with NPC1 and plays an important role in the egress of cholesterol from the lysosomal compartment. Unesterified cholesterol that has been released from LDLs in the lumen of the late endosomes/lysosomes is transferred by NPC2 to the cholesterol-binding pocket in the N-terminal domain of NPC1. May bind and mobilize cholesterol that is associated with membranes. NPC2 binds cholesterol with a 1:1 stoichiometry. Can bind a variety of sterols, including lathosterol, desmosterol and the plant sterols stigmasterol and beta-sitosterol. The secreted form of NCP2 regulates biliary cholesterol secretion via stimulation of ABCG5/ABCG8-mediated cholesterol transport. In Homo sapiens (Human), this protein is NPC intracellular cholesterol transporter 2.